Reading from the N-terminus, the 190-residue chain is Crossover junction endodeoxyribonuclease RuvC (190 aa).

Catalysis depends on residues Asp8, Glu67, and Asp139. Mg(2+) is bound by residues Asp8, Glu67, and Asp139.

Belongs to the RuvC family. In terms of assembly, homodimer which binds Holliday junction (HJ) DNA. The HJ becomes 2-fold symmetrical on binding to RuvC with unstacked arms; it has a different conformation from HJ DNA in complex with RuvA. In the full resolvosome a probable DNA-RuvA(4)-RuvB(12)-RuvC(2) complex forms which resolves the HJ. Mg(2+) serves as cofactor.

It localises to the cytoplasm. It catalyses the reaction Endonucleolytic cleavage at a junction such as a reciprocal single-stranded crossover between two homologous DNA duplexes (Holliday junction).. In terms of biological role, the RuvA-RuvB-RuvC complex processes Holliday junction (HJ) DNA during genetic recombination and DNA repair. Endonuclease that resolves HJ intermediates. Cleaves cruciform DNA by making single-stranded nicks across the HJ at symmetrical positions within the homologous arms, yielding a 5'-phosphate and a 3'-hydroxyl group; requires a central core of homology in the junction. The consensus cleavage sequence is 5'-(A/T)TT(C/G)-3'. Cleavage occurs on the 3'-side of the TT dinucleotide at the point of strand exchange. HJ branch migration catalyzed by RuvA-RuvB allows RuvC to scan DNA until it finds its consensus sequence, where it cleaves and resolves the cruciform DNA. The polypeptide is Crossover junction endodeoxyribonuclease RuvC (Haemophilus influenzae (strain ATCC 51907 / DSM 11121 / KW20 / Rd)).